The chain runs to 334 residues: L-lactate dehydrogenase B chain (334 aa).

Residue alanine 2 is modified to N-acetylalanine. Lysine 7 bears the N6-acetyllysine mark. NAD(+)-binding positions include glycine 30–lysine 58 and arginine 100. Serine 44 bears the Phosphoserine mark. Position 58 is an N6-acetyllysine (lysine 58). Arginine 107 lines the substrate pocket. Lysine 119 carries the post-translational modification N6-acetyllysine. An NAD(+)-binding site is contributed by asparagine 139. Residues asparagine 139 and arginine 170 each coordinate substrate. Histidine 194 (proton acceptor) is an active-site residue. Tyrosine 240 carries the phosphotyrosine modification. Threonine 249 contacts substrate. Position 329 is an N6-acetyllysine (lysine 329).

It belongs to the LDH/MDH superfamily. LDH family. In terms of assembly, homotetramer. Interacts with PTEN upstream reading frame protein MP31; the interaction leads to inhibition of mitochondrial lactate dehydrogenase activity, preventing conversion of lactate to pyruvate in mitochondria.

It is found in the cytoplasm. The protein localises to the mitochondrion inner membrane. The enzyme catalyses (S)-lactate + NAD(+) = pyruvate + NADH + H(+). It participates in fermentation; pyruvate fermentation to lactate; (S)-lactate from pyruvate: step 1/1. In terms of biological role, interconverts simultaneously and stereospecifically pyruvate and lactate with concomitant interconversion of NADH and NAD(+). This Rattus norvegicus (Rat) protein is L-lactate dehydrogenase B chain (Ldhb).